The primary structure comprises 309 residues: Probable ABC transporter permease protein YqgH (309 aa).

Transmembrane regions (helical) follow at residues 30–50, 88–108, 133–153, 165–185, 214–234, and 280–300; these read MIVT…TIFL, FIFG…PLGI, LVGI…VPFI, LLAG…SISA, LVPA…ARAF, and NTLW…ILLI. The region spanning 89 to 300 is the ABC transmembrane type-1 domain; that stretch reads IFGSFAVTIL…VMSFLFILLI (212 aa).

It belongs to the binding-protein-dependent transport system permease family. CysTW subfamily.

The protein resides in the cell membrane. Part of the binding-protein-dependent transport system YqgGHIJK. Probably responsible for the translocation of the substrate across the membrane. The polypeptide is Probable ABC transporter permease protein YqgH (yqgH) (Bacillus subtilis (strain 168)).